A 269-amino-acid chain; its full sequence is MNQMNPAFVMPDVQSTVDTRQIPIQRVGVKAVRHPLTVRTESGDVQPTVGVWNLDVHLPADQKGTHMSRFVALLEESREPLTVERFRAMLASMLVRLEAEAGRIEVTFPYFVNKTAPVSGVQSLLDYEVTLAGESRNGETRLFLKVLVPVTSLCPCSKKISQYGAHNQRSHVTIDAELAADLPVEALIRIAEEEASCELWGLLKRPDEKFVTERAYENPKFVEDLVRDVAQRLDADERVVAYVLEAENFESIHNHSAYALIERDKRHAA.

It belongs to the GTP cyclohydrolase IV family.

It carries out the reaction GTP + H2O = 7,8-dihydroneopterin 3'-triphosphate + formate + H(+). Its pathway is cofactor biosynthesis; 7,8-dihydroneopterin triphosphate biosynthesis; 7,8-dihydroneopterin triphosphate from GTP: step 1/1. Converts GTP to 7,8-dihydroneopterin triphosphate. This chain is GTP cyclohydrolase FolE2, found in Burkholderia ambifaria (strain MC40-6).